The primary structure comprises 499 residues: MSCSGRSLMVVGTSSHVGKTLLVTALCRILKKAGKRVAPFKAQNMSLNAYVTPDGKEIAYAQALQAWAAGIPPAVEMNPILLKPQGNLTSQIVLNGVAVGTYRAGEYYERWFAPAWQAVKEALARLQKQYDWILCEGAGSPAEVNLKHRDLANMRVALHLGSPTWLVADIDRGGALAHVVGTLQLLEPEERALIRGIVINKFRGSRELLQPGLDWLENYTGIPVVGVLPWVDWVLPQEDSMGIAANPLLWEDRRDRAGGQALREGRLEIAVVRLPQVANFSDFDPLLAEPTVHLRWVHPGQSLGSPDVVILPGSKTTLNDLFALQKTGLAEQLRQYSGHIVGICGGLQMLGETIADPEGWEGIAGTYSGLGFLPLTTVLQPTKVTQQVQTQSRWPALAPIQGYEIHQGSTQADPSGCLPLFDRENLGWRDPTGRIWGSYLHGLFDNHLWRRQWLNWLRRQKGWDPLPELEGHYAQQREQLLERLADLWQPHLDLGLLME.

Residues arginine 266–tryptophan 449 enclose the GATase cobBQ-type domain. The Nucleophile role is filled by cysteine 344. The active site involves histidine 441.

It belongs to the CobB/CobQ family. CobQ subfamily.

Its pathway is cofactor biosynthesis; adenosylcobalamin biosynthesis. Functionally, catalyzes amidations at positions B, D, E, and G on adenosylcobyrinic A,C-diamide. NH(2) groups are provided by glutamine, and one molecule of ATP is hydrogenolyzed for each amidation. This Synechococcus sp. (strain JA-2-3B'a(2-13)) (Cyanobacteria bacterium Yellowstone B-Prime) protein is Cobyric acid synthase.